The following is a 413-amino-acid chain: Multidrug resistance protein MdtA (413 aa).

The N-terminal stretch at 1 to 32 (MNAKRIRGLLIFAAVIAIAVLIWRHFTQTSPA) is a signal peptide. Over residues 32 to 46 (AAPGTSEQHAARTSH) the composition is skewed to polar residues. The interval 32–59 (AAPGTSEQHAARTSHSGNNSSGNGGGRR) is disordered.

It belongs to the membrane fusion protein (MFP) (TC 8.A.1) family. In terms of assembly, part of a tripartite efflux system composed of MdtA, MdtB and MdtC.

Its subcellular location is the cell inner membrane. The sequence is that of Multidrug resistance protein MdtA from Pectobacterium carotovorum subsp. carotovorum (strain PC1).